Reading from the N-terminus, the 333-residue chain is Cytochrome f (333 aa).

Positions 1 to 37 are cleaved as a signal peptide; that stretch reads MRNSCKKARRTRPLKATIQALLVAIATMTFFFTSDIA. Residues 38–298 are Cytoplasmic-facing; sequence LPQSAAAYPF…TEIVLQDPNR (261 aa). The heme site is built by Y45, C66, C69, and H70. A helical membrane pass occupies residues 299 to 319; sequence VKWMIAFICLVMLAQLMLILK. Topologically, residues 320-333 are lumenal, thylakoid; that stretch reads KKQVEKVQAAEMNF.

The protein belongs to the cytochrome f family. As to quaternary structure, the 4 large subunits of the cytochrome b6-f complex are cytochrome b6, subunit IV (17 kDa polypeptide, PetD), cytochrome f and the Rieske protein, while the 4 small subunits are PetG, PetL, PetM and PetN. The complex functions as a dimer. Requires heme as cofactor.

It localises to the cellular thylakoid membrane. In terms of biological role, component of the cytochrome b6-f complex, which mediates electron transfer between photosystem II (PSII) and photosystem I (PSI), cyclic electron flow around PSI, and state transitions. In Mastigocladus laminosus (Fischerella sp.), this protein is Cytochrome f (petA).